The following is a 492-amino-acid chain: E3 ubiquitin-protein ligase XIAP (492 aa).

BIR repeat units lie at residues 40 to 105, 172 to 237, and 271 to 334; these read RLAS…KFIN, RLQT…YFVL, and RLET…KFLI. Zn(2+) is bound by residues Cys-303, Cys-306, His-323, and Cys-330. An RING-type zinc finger spans residues 445 to 480; sequence CKVCMDRRISIVFIPCGHLVACAVCADVLDKCPICC.

The protein belongs to the IAP family. In terms of assembly, monomer, and homodimer. Post-translationally, degraded in a 2-step mechanism; a caspase-independent first step and a caspase-dependent second step. Stabilized indirectly by MAPK, which acts to delay caspase activation, rather than directly phosphorylating xiap.

The protein localises to the cytoplasm. It catalyses the reaction S-ubiquitinyl-[E2 ubiquitin-conjugating enzyme]-L-cysteine + [acceptor protein]-L-lysine = [E2 ubiquitin-conjugating enzyme]-L-cysteine + N(6)-ubiquitinyl-[acceptor protein]-L-lysine.. Multi-functional protein which regulates not only caspases and apoptosis, but also acts as an E3 ubiquitin-protein ligase mediating ubiquitination and subsequent proteasomal degradation of its target proteins. Acts as a direct caspase inhibitor. E3 ubiquitin-protein ligase that acts as an important regulator of innate immunity by mediating 'Lys-63'-linked polyubiquitination of ripk2 downstream of NOD1 and NOD2, thereby transforming ripk2 into a scaffolding protein for downstream effectors, ultimately leading to activation of the NF-kappa-B and MAP kinases signaling. A key apoptotic suppressor in eggs. Acts as a positive regulator of Wnt signaling. The sequence is that of E3 ubiquitin-protein ligase XIAP (xiap) from Xenopus tropicalis (Western clawed frog).